The primary structure comprises 474 residues: Glutamate--tRNA ligase (474 aa).

Positions P9 to G19 match the 'HIGH' region motif. A 'KMSKS' region motif is present at residues K240 to R244. K243 contributes to the ATP binding site.

It belongs to the class-I aminoacyl-tRNA synthetase family. Glutamate--tRNA ligase type 1 subfamily. Monomer.

The protein resides in the cytoplasm. It carries out the reaction tRNA(Glu) + L-glutamate + ATP = L-glutamyl-tRNA(Glu) + AMP + diphosphate. In terms of biological role, catalyzes the attachment of glutamate to tRNA(Glu) in a two-step reaction: glutamate is first activated by ATP to form Glu-AMP and then transferred to the acceptor end of tRNA(Glu). The polypeptide is Glutamate--tRNA ligase (Vibrio cholerae serotype O1 (strain ATCC 39315 / El Tor Inaba N16961)).